A 421-amino-acid polypeptide reads, in one-letter code: Mitochondrial tRNA-specific 2-thiouridylase 1 (421 aa).

ATP contacts are provided by residues 10–17 (ALSGGVDS) and Met36. The interval 96-98 (NPD) is interaction with target base in tRNA. Cys101 serves as the catalytic Nucleophile. Cys101 and Cys222 are joined by a disulfide. Position 126 (Gly126) interacts with ATP. Residues 171-173 (KDQ) form an interaction with tRNA region. The active-site Cysteine persulfide intermediate is the Cys222. Residues 334–335 (RH) form an interaction with tRNA region. Residues 395–421 (KGQRRAGMATESPSDSPEDGPGLSPLL) form a disordered region.

It belongs to the MnmA/TRMU family. Ubiquitous. Abundantly expressed in tissues with high metabolic rates including heart, liver, kidney, and brain.

The protein resides in the mitochondrion. It catalyses the reaction 5-taurinomethyluridine(34) in tRNA + S-sulfanyl-L-cysteinyl-[protein] + AH2 + ATP = 5-taurinomethyl-2-thiouridine(34) in tRNA + L-cysteinyl-[protein] + A + AMP + diphosphate + H(+). Functionally, catalyzes the 2-thiolation of uridine at the wobble position (U34) of mitochondrial tRNA(Lys), tRNA(Glu) and tRNA(Gln). Required for the formation of 5-taurinomethyl-2-thiouridine (tm5s2U) of mitochondrial tRNA(Lys), tRNA(Glu), and tRNA(Gln) at the wobble position. ATP is required to activate the C2 atom of the wobble base. This Homo sapiens (Human) protein is Mitochondrial tRNA-specific 2-thiouridylase 1 (TRMU).